The sequence spans 433 residues: Probable D-serine dehydratase (433 aa).

The residue at position 110 (lysine 110) is an N6-(pyridoxal phosphate)lysine.

This sequence belongs to the serine/threonine dehydratase family. DsdA subfamily. Pyridoxal 5'-phosphate is required as a cofactor.

It carries out the reaction D-serine = pyruvate + NH4(+). This is Probable D-serine dehydratase from Oenococcus oeni (strain ATCC BAA-331 / PSU-1).